Reading from the N-terminus, the 496-residue chain is Glycerol kinase (496 aa).

Threonine 12 is an ADP binding site. ATP is bound by residues threonine 12, threonine 13, and serine 14. Threonine 12 serves as a coordination point for sn-glycerol 3-phosphate. Arginine 16 is a binding site for ADP. Positions 82, 83, and 134 each coordinate sn-glycerol 3-phosphate. Arginine 82, glutamate 83, and tyrosine 134 together coordinate glycerol. A Phosphohistidine; by HPr modification is found at histidine 230. Aspartate 244 serves as a coordination point for sn-glycerol 3-phosphate. The glycerol site is built by aspartate 244 and glutamine 245. ADP contacts are provided by threonine 266 and glycine 309. Threonine 266, glycine 309, glutamine 313, and glycine 410 together coordinate ATP. Residues glycine 410 and asparagine 414 each contribute to the ADP site.

It belongs to the FGGY kinase family. The phosphoenolpyruvate-dependent sugar phosphotransferase system (PTS), including enzyme I, and histidine-containing protein (HPr) are required for the phosphorylation of, which leads to the activation of the enzyme.

The catalysed reaction is glycerol + ATP = sn-glycerol 3-phosphate + ADP + H(+). The protein operates within polyol metabolism; glycerol degradation via glycerol kinase pathway; sn-glycerol 3-phosphate from glycerol: step 1/1. Inhibited by fructose 1,6-bisphosphate and p-chloromercuribenzoate (PCMB). Functionally, key enzyme in the regulation of glycerol uptake and metabolism. Catalyzes the phosphorylation of glycerol to yield sn-glycerol 3-phosphate. The polypeptide is Glycerol kinase (Thermus thermophilus).